Consider the following 532-residue polypeptide: Metal-staphylopine-binding protein CntA (532 aa).

The first 20 residues, 1 to 20 (MRKLTKMSAMLLASGLILTG), serve as a signal peptide directing secretion. A lipid anchor (N-palmitoyl cysteine) is attached at Cys21. Residue Cys21 is the site of S-diacylglycerol cysteine attachment. Staphylopine is bound by residues Arg165, Arg418, and Asn448.

Belongs to the bacterial solute-binding protein 5 family. As to quaternary structure, the complex is composed of two ATP-binding proteins (CntD and CntF), two transmembrane proteins (CntB and CntC) and a solute-binding protein (CntA).

Its subcellular location is the cell membrane. In terms of biological role, part of the ABC transporter complex CntABCDF (Opp1) involved in the uptake of metal in complex with the metallophore staphylopine (StP). May be involved in the import of a large array of divalent metals ions such as nickel, cobalt, zinc, copper and iron. Binds the metal via the metallophore StP, and transfers the StP-metal complex to the membrane-bound permease. The sequence is that of Metal-staphylopine-binding protein CntA from Staphylococcus aureus (strain Mu50 / ATCC 700699).